We begin with the raw amino-acid sequence, 115 residues long: T cell receptor beta variable 7-4 (115 aa).

Residues 1–21 (MGTRLLCWVVLGFLGTDHTGA) form the signal peptide. In terms of domain architecture, Ig-like spans 22–115 (GVSQSPRYKV…SAVYLCASSL (94 aa)). Cys-42 and Cys-111 form a disulfide bridge. The interval 67-97 (YSQSDAQRDKSGRPSGRFSAERPERSVSTLK) is disordered.

Alpha-beta TR is a heterodimer composed of an alpha and beta chain; disulfide-linked. The alpha-beta TR is associated with the transmembrane signaling CD3 coreceptor proteins to form the TR-CD3 (TcR or TCR). The assembly of alpha-beta TR heterodimers with CD3 occurs in the endoplasmic reticulum where a single alpha-beta TR heterodimer associates with one CD3D-CD3E heterodimer, one CD3G-CD3E heterodimer and one CD247 homodimer forming a stable octameric structure. CD3D-CD3E and CD3G-CD3E heterodimers preferentially associate with TR alpha and TR beta chains, respectively. The association of the CD247 homodimer is the last step of TcR assembly in the endoplasmic reticulum and is required for transport to the cell surface.

The protein resides in the cell membrane. V region of the variable domain of T cell receptor (TR) beta chain that participates in the antigen recognition. Alpha-beta T cell receptors are antigen specific receptors which are essential to the immune response and are present on the cell surface of T lymphocytes. Recognize peptide-major histocompatibility (MH) (pMH) complexes that are displayed by antigen presenting cells (APC), a prerequisite for efficient T cell adaptive immunity against pathogens. Binding of alpha-beta TR to pMH complex initiates TR-CD3 clustering on the cell surface and intracellular activation of LCK that phosphorylates the ITAM motifs of CD3G, CD3D, CD3E and CD247 enabling the recruitment of ZAP70. In turn ZAP70 phosphorylates LAT, which recruits numerous signaling molecules to form the LAT signalosome. The LAT signalosome propagates signal branching to three major signaling pathways, the calcium, the mitogen-activated protein kinase (MAPK) kinase and the nuclear factor NF-kappa-B (NF-kB) pathways, leading to the mobilization of transcription factors that are critical for gene expression and essential for T cell growth and differentiation. The T cell repertoire is generated in the thymus, by V-(D)-J rearrangement. This repertoire is then shaped by intrathymic selection events to generate a peripheral T cell pool of self-MH restricted, non-autoaggressive T cells. Post-thymic interaction of alpha-beta TR with the pMH complexes shapes TR structural and functional avidity. This is T cell receptor beta variable 7-4 from Homo sapiens (Human).